A 174-amino-acid chain; its full sequence is Alkyl hydroperoxide reductase AhpD (174 aa).

The active-site Proton donor is the Cys130. Cysteines 130 and 133 form a disulfide. Cys133 serves as the catalytic Cysteine sulfenic acid (-SOH) intermediate.

This sequence belongs to the AhpD family. Homotrimer.

It carries out the reaction N(6)-[(R)-dihydrolipoyl]-L-lysyl-[lipoyl-carrier protein] + a hydroperoxide = N(6)-[(R)-lipoyl]-L-lysyl-[lipoyl-carrier protein] + an alcohol + H2O. Functionally, antioxidant protein with alkyl hydroperoxidase activity. Required for the reduction of the AhpC active site cysteine residues and for the regeneration of the AhpC enzyme activity. The protein is Alkyl hydroperoxide reductase AhpD of Corynebacterium kroppenstedtii (strain DSM 44385 / JCM 11950 / CIP 105744 / CCUG 35717).